Reading from the N-terminus, the 1410-residue chain is Slit homolog 1 protein (1410 aa).

A signal peptide spans 1-16; the sequence is MLICFIFILLIPESAT. One can recognise an LRRNT 1 domain in the interval 17 to 43; the sequence is CPAECVCVDRTVSCVGQQLTEVPQNIP. LRR repeat units lie at residues 22–42, 43–66, 67–90, 91–114, 116–138, 140–162, 163–186, 219–242, 286–309, 310–333, 335–357, 358–381, 383–405, 407–430, 442–465, 489–510, 511–535, 536–559, 561–583, and 585–607; these read VCVDRTVSCVGQQLTEVPQNI, PNDTIRLDLQDNEITKIGPNDFSS, LMNLKALQLMDNQIVTIHNQSFSS, LVFLQKLRLSRNRIRHLPDNVFQN, LKLTHLDLSENDITVVSDAQLQG, EFLEVLNLDKNHIFCLENNVISS, WVSLEVLTLNGNRLTTFEEPSNAR, TVCATPLNLQGSSIEILQDKFMTC, PPSTTEIRLEQNQISSIPSHSFKN, LKNLTRLDLSKNIITEIQPKAFLG, HNLHTLVLYGNNITDLKSDTFEG, LGSLQLLLLNANQLTCIRRGTFDH, PKLSMLSLYDNDIKSISEVTFQN, TSLSTLHLAKNPLICDCNLQWLAQ, ARCEQPKRLRKKKFATLPPNKFKC, CDCYGTTVDCNKRGLNTIPTSI, PRFATQLLLSGNNISTVDLNSNIHV, LENLEVLDLSNNHITFINDKSFEK, SKLRELRLNDNKLHHFSSMVLDE, and SNLEILDLSGNNIQCFSSIFFNK. One can recognise an LRRCT 1 domain in the interval 195 to 243; that stretch reads NPWNCDCRLRWMRKWLEKAEGQNKTVCATPLNLQGSSIEILQDKFMTCS. Residues 259-286 enclose the LRRNT 2 domain; it reads ICPLPCTCTGTTVDCRDSGLTYVPTNLP. One can recognise an LRRCT 2 domain in the interval 417 to 466; that stretch reads NPLICDCNLQWLAQINLQKNIETSGARCEQPKRLRKKKFATLPPNKFKCK. The LRRNT 3 domain maps to 484–511; sequence ICPTQCDCYGTTVDCNKRGLNTIPTSIP. In terms of domain architecture, LRRCT 3 spans 619-671; it reads NDLLCDCRILPLMSWLRSNSSHSIDIPPCQQFQYSDNESDKQRCAAFPEETCS. The 27-residue stretch at 677–703 folds into the LRRNT 4 domain; sequence CPPKCSCLDRVVRCSNKNLTSFPSRIP. LRR repeat units lie at residues 681–703, 704–726, 727–750, 752–774, 775–798, and 800–823; these read CSCLDRVVRCSNKNLTSFPSRIP, FDTTELYLDANYINEIPAHDLNR, LYSLTKLDLSHNRLISLENNTFSN, TRLSTLIISYNKLRCLQPLAFNG, LNALRILSLHGNDISFLPQSAFSN, and TSITHIAVGSNSLYCDCNMAWFSK. The LRRCT 4 domain maps to 810–859; sequence NSLYCDCNMAWFSKWIKSKFIEAGIARCEYPNTVSNQLLLTAQPYQFTCD. 2 EGF-like domains span residues 871–906 and 908–945; these read DLCLNSPCKNNAICETTSSRKYTCNCTPGFYGVHCE and QIDACYGSPCLNNATCKVAQAGRFNCYCNKGFEGDYCE. 18 disulfides stabilise this stretch: Cys873–Cys884, Cys878–Cys894, Cys896–Cys905, Cys912–Cys923, Cys917–Cys933, Cys935–Cys944, Cys951–Cys962, Cys956–Cys971, Cys973–Cys982, Cys989–Cys1002, Cys996–Cys1011, Cys1013–Cys1022, Cys1029–Cys1040, Cys1034–Cys1049, Cys1051–Cys1060, Cys1076–Cys1086, Cys1081–Cys1097, and Cys1099–Cys1108. Positions 947 to 983 constitute an EGF-like 1; calcium-binding domain; it reads NIDDCVNSKCENGGKCVDLINSYRCDCPMEYEGKHCE. In terms of domain architecture, EGF-like 3 spans 985–1023; the sequence is KLEYCTKKLNPCENNGKCIPINGSYSCMCSPGFTGNNCE. Positions 1025 to 1061 constitute an EGF-like 2; calcium-binding domain; it reads NIDDCKNVECQNGGSCVDGILSYDCLCRPGYAGQYCE. In terms of domain architecture, EGF-like 4 spans 1072-1109; it reads KTDACQQSACGQGECVASQNSSDFTCKCHEGFSGPSCD. The region spanning 1112–1285 is the Laminin G-like domain; sequence MSVGFKNPGA…LENVNTEQSC (174 aa). Residues 1197–1221 form an LRR 27 repeat; the sequence is TSERKCFLQIDKNPVQIVENSGKSD. 8 disulfides stabilise this stretch: Cys1259–Cys1285, Cys1292–Cys1302, Cys1297–Cys1314, Cys1316–Cys1325, Cys1332–Cys1368, Cys1346–Cys1382, Cys1357–Cys1398, and Cys1361–Cys1400. The 39-residue stretch at 1288–1326 folds into the EGF-like 5 domain; that stretch reads TVNFCAGIDCGNGKCTNNALSPKGYMCQCDSHFSGEHCD. The region spanning 1332–1406 is the CTCK domain; that stretch reads CDKQKFRRHH…QCQCEPTKSV (75 aa).

As to quaternary structure, interacts with eva-1.

The protein resides in the secreted. Functionally, functions as a ligand for sax-3 receptor during larval development. Acts via the sax-3/Robo receptor to direct ventral axon guidance and guidance at the midline during embryonic development. This chain is Slit homolog 1 protein (slt-1), found in Caenorhabditis elegans.